Consider the following 183-residue polypeptide: Protein FAM180B (183 aa).

Residues 1–23 (MAATLQFLVCLVVAICLLSGVTT) form the signal peptide.

This sequence belongs to the FAM180 family.

It localises to the secreted. The protein is Protein FAM180B (FAM180B) of Homo sapiens (Human).